Consider the following 282-residue polypeptide: Kanosamine-6-phosphate phosphatase (282 aa).

Residue D25 is the Nucleophile of the active site. 2 residues coordinate Mg(2+): D25 and D27. K209 provides a ligand contact to phosphate. 2 residues coordinate Mg(2+): D232 and S233. N235 contacts phosphate.

The protein belongs to the HAD-like hydrolase superfamily. Cof family. As to quaternary structure, homotetramer. It depends on Mg(2+) as a cofactor.

It catalyses the reaction D-kanosamine 6-phosphate + H2O = kanosamine + phosphate. The protein operates within antibiotic biosynthesis; kanosamine biosynthesis. Its function is as follows. Involved in the biosynthesis of kanosamine (3-amino-3-deoxy-D-glucose), which is known to have antibiotic and antifungal properties, and to be a precursor of the antibiotic neotrehalosadiamine (3,3'-diamino-3,3'-dideoxy-alpha,beta-trehalose (NTD)). Catalyzes the dephosphorylation of kanosamine 6-phosphate to yield kanosamine. There is a trace amount of activity using glucosamine-6-phosphate. This is Kanosamine-6-phosphate phosphatase (ntdB) from Bacillus subtilis (strain 168).